A 248-amino-acid chain; its full sequence is PF03932 family protein CutC (248 aa).

It belongs to the CutC family. As to quaternary structure, homodimer.

Its subcellular location is the cytoplasm. The chain is PF03932 family protein CutC from Salmonella paratyphi A (strain AKU_12601).